The primary structure comprises 386 residues: Probable mannan endo-1,4-beta-mannosidase A (386 aa).

The first 21 residues, 1–21, serve as a signal peptide directing secretion; that stretch reads MKLNPSLLTAAGLVSAQLASA. The substrate site is built by Trp-95 and Asn-207. Glu-208 acts as the Proton donor in catalysis. Tyr-283 contacts substrate. Glu-316 acts as the Nucleophile in catalysis. Asn-336 carries N-linked (GlcNAc...) asparagine glycosylation. Trp-346 serves as a coordination point for substrate.

Belongs to the glycosyl hydrolase 5 (cellulase A) family.

The protein resides in the secreted. It carries out the reaction Random hydrolysis of (1-&gt;4)-beta-D-mannosidic linkages in mannans, galactomannans and glucomannans.. In terms of biological role, endo-1,4-mannanase, a crucial enzyme for depolymerization of seed galactomannans and wood galactoglucomannans. This chain is Probable mannan endo-1,4-beta-mannosidase A (manA), found in Aspergillus flavus (strain ATCC 200026 / FGSC A1120 / IAM 13836 / NRRL 3357 / JCM 12722 / SRRC 167).